The following is a 406-amino-acid chain: O-glycosyltransferase PaGT (406 aa).

The interval 1-26 (MSPPSQIKPPQGTTPVPPSELDPRSD) is disordered.

The protein belongs to the afumC glycosyltransferase family.

Its pathway is mycotoxin biosynthesis. Its function is as follows. O-glycosyltransferase; part of the 2 gene clusters that mediate the biosynthesis of fusicoccins, diterpene glucosides that display phytohormone-like activity and function as potent activators of plasma membrane H(+)-ATPases in plants by modifying 14-3-3 proteins and cause the plant disease constriction canker. The first step in the pathway is performed by the fusicoccadiene synthase PaFS that possesses both prenyl transferase and terpene cyclase activity, converting isopentenyl diphosphate and dimethylallyl diphosphate into geranylgeranyl diphosphate (GGDP) and successively converting GGDP into fusicocca-2,10(14)-diene, a precursor for fusicoccin H. The second step is the oxidation at the C-8 position by the cytochrome P450 monooxygenase PaP450-2 to yield fusicocca-2,10(14)-diene-8-beta-ol. The cytochrome P450 monooxygenase PaP450-1 then catalyzes the hydroxylation at the C-16 position to produce fusicocca-2,10(14)-diene-8-beta,16-diol. The dioxygenase fc-dox then catalyzes the 16-oxydation of fusicocca-2,10(14)-diene-8-beta,16-diol to yield an aldehyde (8-beta-hydroxyfusicocca-1,10(14)-dien-16-al). The short-chain dehydrogenase/reductase fc-sdr catalyzes the reduction of the aldehyde to yield fusicocca-1,10(14)-diene-8-beta,16-diol. The next step is the hydroxylation at C-9 performed by the cytochrome P450 monooxygenase PaP450-3 that leads to fusicoccin H aglycon which is glycosylated to fusicoccin H by the O-glycosyltransferase PaGT. Hydroxylation at C-12 by the cytochrome P450 monooxygenase PaP450-4 leads then to the production of fusicoccin Q and is followed by methylation by the O-methyltransferase PaMT to yield fusicoccin P. Fusicoccin P is further converted to fusicoccin J via prenylation by the O-glucose prenyltransferase PaPT. Cytochrome P450 monooxygenase PaP450-5 then performs hydroxylation at C-19 to yield dideacetyl-fusicoccin A which is acetylated to 3'-O-deacetyl-fusicoccin A by the O-acetyltransferase PaAT-2. Finally, a another acetylation by the O-acetyltransferase PaAT-1 yields fusicoccin A. The polypeptide is O-glycosyltransferase PaGT (Phomopsis amygdali (Fusicoccum amygdali)).